Here is a 436-residue protein sequence, read N- to C-terminus: Chromosomal replication initiator protein DnaA (436 aa).

Residues Met1 to Ile69 form a domain I, interacts with DnaA modulators region. The segment at Ile69 to Ser97 is domain II. Residues Val98 to Ser311 are domain III, AAA+ region. Positions 142, 144, 145, and 146 each coordinate ATP. The domain IV, binds dsDNA stretch occupies residues Lys312–Glu436.

It belongs to the DnaA family. Oligomerizes as a right-handed, spiral filament on DNA at oriC.

The protein resides in the cytoplasm. Its function is as follows. Plays an essential role in the initiation and regulation of chromosomal replication. ATP-DnaA binds to the origin of replication (oriC) to initiate formation of the DNA replication initiation complex once per cell cycle. Binds the DnaA box (a 9 base pair repeat at the origin) and separates the double-stranded (ds)DNA. Forms a right-handed helical filament on oriC DNA; dsDNA binds to the exterior of the filament while single-stranded (ss)DNA is stabiized in the filament's interior. The ATP-DnaA-oriC complex binds and stabilizes one strand of the AT-rich DNA unwinding element (DUE), permitting loading of DNA polymerase. After initiation quickly degrades to an ADP-DnaA complex that is not apt for DNA replication. Binds acidic phospholipids. This is Chromosomal replication initiator protein DnaA from Nautilia profundicola (strain ATCC BAA-1463 / DSM 18972 / AmH).